We begin with the raw amino-acid sequence, 877 residues long: Probable sulfate permease C3H7.02 (877 aa).

The next 13 membrane-spanning stretches (helical) occupy residues 133-153 (WLVYDFIAGITVGCVVVPQGM), 161-181 (LPAQYGLYSSFVGVAIYCIFA), 186-206 (VSIGPVAVMSLVTSKVIANVQ), 221-241 (LALLAGAITCGLGLLRLGFII), 243-263 (FIPVPAVAGFTTGSALNIMAG), 292-312 (LPHTKVDAAFGLVSLFILYLV), 329-349 (VFFLTNVLRSAVIIIVGTAIS), 384-404 (LCADLASELPVSVIVLLLEHI), 424-444 (LIAMGATNLIGVFFHAYPATG), 461-481 (LGGIFTAGVVVLALYCLTGAF), 484-504 (IPNAVLSAVIIHSVFDLIIPW), 518-538 (ALIFICAVFVSVFSSIENGIY), and 543-563 (LSAALLLFRIAKPSGSFLGIL). Positions 594–747 (NLTVRDPPAG…SRSIEVGSAA (154 aa)) constitute an STAS domain. Disordered stretches follow at residues 643–663 (KASDRPWNDPAPRKKKNAPEV) and 793–821 (ADSDTISVSDDKDKKVEGHRPSQDPTFSH). A compositionally biased stretch (basic and acidic residues) spans 801–821 (SDDKDKKVEGHRPSQDPTFSH).

This sequence belongs to the SLC26A/SulP transporter (TC 2.A.53) family.

Its subcellular location is the membrane. Functionally, high affinity uptake of sulfate into the cell. The sequence is that of Probable sulfate permease C3H7.02 from Schizosaccharomyces pombe (strain 972 / ATCC 24843) (Fission yeast).